The primary structure comprises 1113 residues: Sterol regulatory element binding protein sbp-1 (1113 aa).

Residues 1–52 are transcriptional activation (acidic); it reads MNEEFEGDVPMSDPFLSLVTKLDDIAPFPNNDPLDFDMEHNWQEPGPSQQPD. Disordered stretches follow at residues 24 to 68, 101 to 132, 206 to 274, and 290 to 345; these read DIAP…EYYD, LGGG…TSPP, SPYD…SPQN, and EVER…SQGT. The span at 229-238 shows a compositional bias: basic residues; that stretch reads PHHHHHHPMP. Acidic residues predominate over residues 324 to 337; it reads AEGDEDEDDEDSDS. The basic motif stretch occupies residues 355 to 368; that stretch reads ERRTAHNLIEKKYR. The region spanning 355 to 405 is the bHLH domain; that stretch reads ERRTAHNLIEKKYRCSINDRIQQLKVLLCGDEAKLSKSATLRRAIEHIEEV. The tract at residues 369 to 405 is helix-loop-helix motif; it reads CSINDRIQQLKVLLCGDEAKLSKSATLRRAIEHIEEV. Residues 395–422 adopt a coiled-coil conformation; it reads LRRAIEHIEEVEHENQVLKHHVEQMRKT. The disordered stretch occupies residues 437 to 472; the sequence is TEYSARSPVESSPSPPRNERKRSRMSTTTPMKNGTR. Helical transmembrane passes span 478 to 498 and 541 to 561; these read VTLF…LLAG and MSYV…KLLI.

In terms of processing, processed in the Golgi apparatus, releasing the protein from the membrane. Ubiquitinated; the nuclear form has a rapid turnover and is rapidly ubiquitinated and degraded by the proteasome in the nucleus. Broadly expressed, including many cells in the head. Expressed in the intestine.

It localises to the nucleus. The protein localises to the endoplasmic reticulum membrane. In terms of biological role, transcription factor involved in maintaining normal fat levels. Regulates the expression of genes involved in lipid metabolism in response to nutrient availability, such as the fatty-acid desaturases fat-5, fat-6 and fat-7. In response to a high-glucose diet, promotes fatty acid synthesis, elongation and desaturation, acting in concert with transcription factor mxl-3. Plays a role in synthesis of monomethyl branched-chain fatty acids (mmBCFAs) as well as other very-long-chain fatty acids. Downstream of the cis-Golgi membrane protein eas-1/GOLT1B and the E3 ubiquitin ligase rnf-145/RNF145, plays a role in the regulation of glial size, perhaps by modulating synthesis of long-chain polyunsaturated fatty-acids (LC-PUFA). Modulates expression of genes in the one-carbon cycle, which produces the methyl donor S-adenosylmethionine (SAM). Probably involved in a feedback loop in which decreased levels of SAM lead to increased transcriptional activity of sbp-1, thereby causing lipid accumulation. Involved in the negative regulation of zinc homeostasis. Involved in the response to simulated microgravity, in concert with Mediator complex subunit mdt-15, probably acting in the intestine. Plays a role in transgenerational lipid accumulation in response to a high-fat diet, probably acting by upregulating wdr-5.1 expression to increase the level of trimethylated 'Lys-4' histone H3 (H3K4me3), which may then induce the expression of fat-5, fat-6 and fat-7. May act as an oxygen sensor for lipid metabolism. Precursor of the transcription factor form, which is embedded in the endoplasmic reticulum membrane. Processing of this form allows release of the transcription factor form that translocates into the nucleus and activates transcription of genes involved in sterol biosynthesis and lipid homeostasis. Its function is as follows. Key transcription factor that regulates expression of genes involved in sterol biosynthesis and lipid homeostasis. The polypeptide is Sterol regulatory element binding protein sbp-1 (Caenorhabditis elegans).